We begin with the raw amino-acid sequence, 539 residues long: Chaperonin GroEL 1 (539 aa).

Residues 29-32, 86-90, Gly413, 478-480, and Asp494 each bind ATP; these read TLGP, DGTTT, and NAA.

The protein belongs to the chaperonin (HSP60) family. Forms a cylinder of 14 subunits composed of two heptameric rings stacked back-to-back. Interacts with the co-chaperonin GroES.

It is found in the cytoplasm. It catalyses the reaction ATP + H2O + a folded polypeptide = ADP + phosphate + an unfolded polypeptide.. In terms of biological role, together with its co-chaperonin GroES, plays an essential role in assisting protein folding. The GroEL-GroES system forms a nano-cage that allows encapsulation of the non-native substrate proteins and provides a physical environment optimized to promote and accelerate protein folding. This chain is Chaperonin GroEL 1, found in Corynebacterium diphtheriae (strain ATCC 700971 / NCTC 13129 / Biotype gravis).